Reading from the N-terminus, the 173-residue chain is Peptide deformylase (173 aa).

Cysteine 91 and histidine 133 together coordinate Fe cation. Residue glutamate 134 is part of the active site. Histidine 137 contributes to the Fe cation binding site.

This sequence belongs to the polypeptide deformylase family. The cofactor is Fe(2+).

It carries out the reaction N-terminal N-formyl-L-methionyl-[peptide] + H2O = N-terminal L-methionyl-[peptide] + formate. Removes the formyl group from the N-terminal Met of newly synthesized proteins. Requires at least a dipeptide for an efficient rate of reaction. N-terminal L-methionine is a prerequisite for activity but the enzyme has broad specificity at other positions. This is Peptide deformylase from Buchnera aphidicola subsp. Acyrthosiphon pisum (strain 5A).